We begin with the raw amino-acid sequence, 287 residues long: Undecaprenyl-diphosphatase (287 aa).

Helical transmembrane passes span 1–21, 49–69, 101–121, 126–146, 160–180, 203–223, 232–252, and 267–287; these read MALW…FLPV, MILF…VVFA, LFLL…TLKA, VFAN…LLFW, TGVG…MPGL, YSFF…AIEV, VSVA…IVSL, and FSFY…DLPI.

The protein belongs to the UppP family.

Its subcellular location is the cell inner membrane. It carries out the reaction di-trans,octa-cis-undecaprenyl diphosphate + H2O = di-trans,octa-cis-undecaprenyl phosphate + phosphate + H(+). Catalyzes the dephosphorylation of undecaprenyl diphosphate (UPP). Confers resistance to bacitracin. This Halorhodospira halophila (strain DSM 244 / SL1) (Ectothiorhodospira halophila (strain DSM 244 / SL1)) protein is Undecaprenyl-diphosphatase.